A 192-amino-acid polypeptide reads, in one-letter code: MILNRRIQVILPTLLILSFIIWIFHSVMVDKDWRLFMPEIKSLPDREGQGRKPIEMMSTKHDNNTNNLMVNAYWKLIHTVVSNYPNRPTLDERDILRHYLFSSAITMPCGEYSVELQKILDVHPPQTSSRKAATTWACKVHNQLNEKMNQPKTSCDGFNERYVIGSPTYRESEAENVPERVQVINEDHDYSG.

Residues 1–8 lie on the Cytoplasmic side of the membrane; the sequence is MILNRRIQ. The helical; Signal-anchor transmembrane segment at 9 to 29 threads the bilayer; the sequence is VILPTLLILSFIIWIFHSVMV. Residues 30-192 are Lumenal-facing; that stretch reads DKDWRLFMPE…VINEDHDYSG (163 aa). The region spanning 61–162 is the ERV/ALR sulfhydryl oxidase domain; it reads HDNNTNNLMV…TSCDGFNERY (102 aa). The FAD site is built by tryptophan 74, cysteine 138, histidine 141, asparagine 145, and tyrosine 162. A disulfide bond links cysteine 138 and cysteine 155.

The cofactor is FAD.

It localises to the endoplasmic reticulum membrane. The protein resides in the cytoplasm. The protein localises to the nucleus. It carries out the reaction 2 R'C(R)SH + O2 = R'C(R)S-S(R)CR' + H2O2. Functionally, FAD-dependent sulfhydryl oxidase that catalyzes disulfide bond formation in the endoplasmic reticulum lumen. This is FAD-linked sulfhydryl oxidase erv2 (erv2) from Schizosaccharomyces pombe (strain 972 / ATCC 24843) (Fission yeast).